The sequence spans 300 residues: Alpha-ketoglutarate-dependent dioxygenase alkB homolog 4 (300 aa).

Residue Ala-2 is modified to N-acetylalanine. Residues 148–272 (PVEQCNLDYS…RVCATFRELS (125 aa)) enclose the Fe2OG dioxygenase domain. Positions 167, 169, and 252 each coordinate Fe cation. Position 263 (Arg-263) interacts with 2-oxoglutarate.

This sequence belongs to the alkB family. In terms of assembly, interacts with ZFHX3, MLLT3, MLLT1, HSF4, EP300, TES, EIF3C, MTMR6 and PSMA6. Requires Fe(2+) as cofactor.

The protein resides in the cytoplasm. The protein localises to the nucleus. Its subcellular location is the nucleolus. It localises to the midbody. It catalyses the reaction an N(6)-methyl-2'-deoxyadenosine in DNA + 2-oxoglutarate + O2 = a 2'-deoxyadenosine in DNA + formaldehyde + succinate + CO2. The enzyme catalyses N(6)-methyl-L-lysyl-[protein] + 2-oxoglutarate + O2 = L-lysyl-[protein] + formaldehyde + succinate + CO2. In terms of biological role, dioxygenase that mediates demethylation of actin monomethylated at 'Lys-84' (K84me1), thereby acting as a regulator of actomyosin-processes. Demethylation of actin K84me1 is required for maintaining actomyosin dynamics supporting normal cleavage furrow ingression during cytokinesis and cell migration. In addition to proteins, also demethylates DNA: specifically demethylates DNA methylated on the 6th position of adenine (N(6)-methyladenosine) DNA, thereby regulating Polycomb silencing. This chain is Alpha-ketoglutarate-dependent dioxygenase alkB homolog 4, found in Mus musculus (Mouse).